A 716-amino-acid chain; its full sequence is 1,4-alpha-glucan branching enzyme GlgB (716 aa).

Catalysis depends on Asp398, which acts as the Nucleophile. Glu451 functions as the Proton donor in the catalytic mechanism.

This sequence belongs to the glycosyl hydrolase 13 family. GlgB subfamily. In terms of assembly, monomer.

It catalyses the reaction Transfers a segment of a (1-&gt;4)-alpha-D-glucan chain to a primary hydroxy group in a similar glucan chain.. It participates in glycan biosynthesis; glycogen biosynthesis. Functionally, catalyzes the formation of the alpha-1,6-glucosidic linkages in glycogen by scission of a 1,4-alpha-linked oligosaccharide from growing alpha-1,4-glucan chains and the subsequent attachment of the oligosaccharide to the alpha-1,6 position. This Nitrobacter winogradskyi (strain ATCC 25391 / DSM 10237 / CIP 104748 / NCIMB 11846 / Nb-255) protein is 1,4-alpha-glucan branching enzyme GlgB.